We begin with the raw amino-acid sequence, 68 residues long: Large ribosomal subunit protein bL32 (68 aa).

Residues 1-21 (MAVQQNKVSKSRRNNRRAHDS) are disordered.

This sequence belongs to the bacterial ribosomal protein bL32 family.

The sequence is that of Large ribosomal subunit protein bL32 from Roseobacter denitrificans (strain ATCC 33942 / OCh 114) (Erythrobacter sp. (strain OCh 114)).